The sequence spans 561 residues: NAD(P)H-quinone oxidoreductase chain 4 2 (561 aa).

The next 14 helical transmembrane spans lie at 6 to 26, 36 to 56, 87 to 107, 115 to 135, 136 to 156, 169 to 189, 210 to 230, 244 to 264, 275 to 295, 312 to 332, 333 to 353, 376 to 396, 419 to 439, and 490 to 510; these read FPWL…IPFI, WYGL…FWKY, LSMP…FAAW, LFYF…VAQD, LMLL…LISI, FLLY…GMAL, AFEL…LAVF, SAPV…YGLI, HVYF…YGGL, VAHM…GISG, ALLQ…LAGV, IFAL…MSGF, VTVF…LSML, and VAIA…PKIA.

The protein belongs to the complex I subunit 4 family.

The protein resides in the cellular thylakoid membrane. The enzyme catalyses a plastoquinone + NADH + (n+1) H(+)(in) = a plastoquinol + NAD(+) + n H(+)(out). The catalysed reaction is a plastoquinone + NADPH + (n+1) H(+)(in) = a plastoquinol + NADP(+) + n H(+)(out). In terms of biological role, NDH-1 shuttles electrons from NAD(P)H, via FMN and iron-sulfur (Fe-S) centers, to quinones in the respiratory chain. The immediate electron acceptor for the enzyme in this species is believed to be plastoquinone. Couples the redox reaction to proton translocation (for every two electrons transferred, four hydrogen ions are translocated across the cytoplasmic membrane), and thus conserves the redox energy in a proton gradient. The polypeptide is NAD(P)H-quinone oxidoreductase chain 4 2 (Trichodesmium erythraeum (strain IMS101)).